Here is a 482-residue protein sequence, read N- to C-terminus: ATP synthase subunit beta (482 aa).

162-169 (GGAGVGKT) contacts ATP.

F-type ATPases have 2 components, CF(1) - the catalytic core - and CF(0) - the membrane proton channel. CF(1) has five subunits: alpha(3), beta(3), gamma(1), delta(1), epsilon(1). CF(0) has four main subunits: a(1), b(1), b'(1) and c(9-12).

It is found in the cellular thylakoid membrane. The enzyme catalyses ATP + H2O + 4 H(+)(in) = ADP + phosphate + 5 H(+)(out). Inhibited by dicyclohexylcarbodiimide. Its function is as follows. Produces ATP from ADP in the presence of a proton gradient across the membrane. The catalytic sites are hosted primarily by the beta subunits. The complex from the organism is particularly stable to disruption and remains functional after 6 hrs at 55 degrees Celsius. The chain is ATP synthase subunit beta from Thermosynechococcus vestitus (strain NIES-2133 / IAM M-273 / BP-1).